Reading from the N-terminus, the 63-residue chain is Large ribosomal subunit protein bL28 (63 aa).

The protein belongs to the bacterial ribosomal protein bL28 family.

The chain is Large ribosomal subunit protein bL28 from Geobacter sulfurreducens (strain ATCC 51573 / DSM 12127 / PCA).